We begin with the raw amino-acid sequence, 223 residues long: Ethylene-inducing xylanase (223 aa).

Residues 1–19 (MVSFTTLLAGFVAVTGVLS) form the signal peptide. A GH11 domain is found at 34 to 223 (QTIGPGTGFN…SSGNANINVS (190 aa)). The N-linked (GlcNAc...) asparagine glycan is linked to Asn94. The active-site Nucleophile is Glu119. Glu210 serves as the catalytic Proton donor.

The protein belongs to the glycosyl hydrolase 11 (cellulase G) family. Interactc with tomato LeEix2 receptor to trigger its internalization.

It is found in the secreted. The enzyme catalyses Endohydrolysis of (1-&gt;4)-beta-D-xylosidic linkages in xylans.. It functions in the pathway glycan degradation; xylan degradation. Endo-1,4-beta-xylanase involved in the hydrolysis of xylan, a major structural heterogeneous polysaccharide found in plant biomass representing the second most abundant polysaccharide in the biosphere, after cellulose. Acts as an elicitor of plant defense responses in hosts such as tobacco (Nicotiana tabacum) or tomato (Solanum lycopersicum). Induces the production of ethylene and leads alterations in membrane function with rapid efflux of potassium, uptake of calcium, alkalization of the medium, increased leakage of cellular components and necrosis in plant hosts. EIX is translocated through the xylem of the host plant to the leaf mesophyll, leading to host response to pathogen-derived extracellular proteins in tissues distant from the invading pathogen. Greatly enhances the expression of two calcineurin B-like proteins-interacting protein kinases (CIPKs) family members, OsCIPK14 and OsCIPK15, in rice cultured cells. In tomato, triggers the defense response via binding to and subsequent internalization of the LeEix2 receptor. This Hypocrea rufa (Trichoderma viride) protein is Ethylene-inducing xylanase.